Reading from the N-terminus, the 316-residue chain is Epoxide hydrolase 3 (316 aa).

An AB hydrolase-1 domain is found at 25–302 (PVVLLLHGFP…ACHFINQERP (278 aa)). Aspartate 101 serves as the catalytic Nucleophile. Residue tyrosine 150 participates in an epoxide binding. The active-site Proton donor is the tyrosine 230. The Proton acceptor role is filled by histidine 295.

This sequence belongs to the AB hydrolase superfamily. Epoxide hydrolase family. In terms of assembly, homodimer. Highly expressed in young fruits 15 days after anthesis (15-DAA).

The enzyme catalyses an epoxide + H2O = an ethanediol. The catalysed reaction is (24S)-24,25-epoxycucurbitadienol + H2O = (24R)-24,25-dihydroxycucurbitadienol. It participates in secondary metabolite biosynthesis; terpenoid biosynthesis. In terms of biological role, epoxide hydrolase involved in the biosynthesis of cucurbitacin and mogroside tetracyclic triterpene natural products (e.g. siamenoside I and mogrosides IV, V and VI). Cucurbitacins have cytotoxic properties and exhibit deterrent taste as a defense barrier against herbivores. Mogrosides are nonsugar highly oxygenated compounds used as high-intensity zero-calorie sweeteners; they also possess pharmacological properties such as regulating immunity, lowering blood sugar and lipid levels, protecting the liver, and acting as antioxidants and antitumor agents. Catalyzes the hydrolysis of aromatic epoxide-containing substrates, such as the conversion of 24,25-epoxycucurbitadienol to 24,25-dihydroxycucurbitadienol. The chain is Epoxide hydrolase 3 from Siraitia grosvenorii (Monk's fruit).